The following is a 264-amino-acid chain: Zinc transporter ZupT (264 aa).

5 helical membrane-spanning segments follow: residues 8 to 28 (AFIL…IAFV), 36 to 56 (FLSV…MIEI), 75 to 95 (WLTV…DKLI), 121 to 141 (GLMT…ATFI), and 148 to 168 (SIAI…GIAV). Fe(2+)-binding residues include Asn132 and Glu135. Positions 135 and 160 each coordinate Zn(2+). Fe(2+)-binding residues include Asn161, Glu164, and Glu193. Residue Glu164 participates in Zn(2+) binding. The next 3 helical transmembrane spans lie at 197–217 (AIIG…GAIF), 219–239 (AVAG…AEEY), and 244–264 (LAIY…LLFI).

Belongs to the ZIP transporter (TC 2.A.5) family. ZupT subfamily.

Its subcellular location is the cell membrane. It catalyses the reaction Zn(2+)(in) = Zn(2+)(out). Its function is as follows. Mediates zinc uptake. May also transport other divalent cations. The sequence is that of Zinc transporter ZupT from Streptococcus mutans serotype c (strain ATCC 700610 / UA159).